Consider the following 142-residue polypeptide: UPF0336 protein PPA1896 (142 aa).

The protein belongs to the UPF0336 family.

The protein is UPF0336 protein PPA1896 of Cutibacterium acnes (strain DSM 16379 / KPA171202) (Propionibacterium acnes).